Consider the following 598-residue polypeptide: Arginine--tRNA ligase (598 aa).

Positions 135-145 (ANPTGPIHIGG) match the 'HIGH' region motif. The tract at residues 229–248 (VDGGTDEKGEPLGEGDSEQR) is disordered. Residues 231-248 (GGTDEKGEPLGEGDSEQR) are compositionally biased toward basic and acidic residues.

This sequence belongs to the class-I aminoacyl-tRNA synthetase family. Monomer.

Its subcellular location is the cytoplasm. It catalyses the reaction tRNA(Arg) + L-arginine + ATP = L-arginyl-tRNA(Arg) + AMP + diphosphate. In Bifidobacterium animalis subsp. lactis (strain AD011), this protein is Arginine--tRNA ligase.